A 243-amino-acid polypeptide reads, in one-letter code: Aliphatic sulfonates import ATP-binding protein SsuB (243 aa).

Residues 11-230 enclose the ABC transporter domain; the sequence is ATVRGLRKSY…RTHPSFASYT (220 aa). 43 to 50 is an ATP binding site; sequence GRSGSGKS.

It belongs to the ABC transporter superfamily. Aliphatic sulfonates importer (TC 3.A.1.17.2) family. As to quaternary structure, the complex is composed of two ATP-binding proteins (SsuB), two transmembrane proteins (SsuC) and a solute-binding protein (SsuA).

Its subcellular location is the cell membrane. The catalysed reaction is ATP + H2O + aliphatic sulfonate-[sulfonate-binding protein]Side 1 = ADP + phosphate + aliphatic sulfonateSide 2 + [sulfonate-binding protein]Side 1.. Part of the ABC transporter complex SsuABC involved in aliphatic sulfonates import. Responsible for energy coupling to the transport system. Is also involved in taurine transport. Seems to not be involved in long chain aliphatic sulfonates transport (chain length of eight carbon atoms or more). This Corynebacterium glutamicum (strain ATCC 13032 / DSM 20300 / JCM 1318 / BCRC 11384 / CCUG 27702 / LMG 3730 / NBRC 12168 / NCIMB 10025 / NRRL B-2784 / 534) protein is Aliphatic sulfonates import ATP-binding protein SsuB.